Here is a 779-residue protein sequence, read N- to C-terminus: Ribonucleoside-diphosphate reductase large subunit (779 aa).

Residues Ser-178, 193–194 (SC), Gly-222, 420–424 (NLCIE), and 614–618 (PTATS) contribute to the substrate site. Cys-194 and Cys-440 are joined by a disulfide. The active-site Proton acceptor is the Asn-420. Cys-422 functions as the Cysteine radical intermediate in the catalytic mechanism. The active-site Proton acceptor is the Glu-424.

Belongs to the ribonucleoside diphosphate reductase large chain family. Heterotetramer composed of a homodimer of the large subunit (R1) and a homodimer of the small subunit (R2). Larger multisubunit protein complex are also active, composed of (R1)n(R2)n.

The enzyme catalyses a 2'-deoxyribonucleoside 5'-diphosphate + [thioredoxin]-disulfide + H2O = a ribonucleoside 5'-diphosphate + [thioredoxin]-dithiol. Its activity is regulated as follows. Under complex allosteric control mediated by deoxynucleoside triphosphates and ATP binding. The type of nucleotide bound at the specificity site determines substrate preference. It seems probable that ATP makes the enzyme reduce CDP and UDP, dGTP favors ADP reduction and dTTP favors GDP reduction. In terms of biological role, ribonucleoside-diphosphate reductase holoenzyme provides the precursors necessary for viral DNA synthesis. Allows virus growth in non-dividing cells. Catalyzes the biosynthesis of deoxyribonucleotides from the corresponding ribonucleotides. The protein is Ribonucleoside-diphosphate reductase large subunit of Ornithodoros (relapsing fever ticks).